Consider the following 367-residue polypeptide: Aspartate-semialdehyde dehydrogenase (367 aa).

Residues 10 to 13 (RGMV), 37 to 38 (TS), and Q73 contribute to the NADP(+) site. A phosphate-binding site is contributed by R102. The active-site Acyl-thioester intermediate is C135. C135 bears the S-cysteinyl cysteine; in inhibited form mark. Q162 is a substrate binding site. Residues 165-166 (SG) and P193 each bind NADP(+). E241 lines the substrate pocket. Residue K244 coordinates phosphate. R267 is a substrate binding site. Residue H274 is the Proton acceptor of the active site. Q350 lines the NADP(+) pocket.

The protein belongs to the aspartate-semialdehyde dehydrogenase family. As to quaternary structure, homodimer.

The catalysed reaction is L-aspartate 4-semialdehyde + phosphate + NADP(+) = 4-phospho-L-aspartate + NADPH + H(+). Its pathway is amino-acid biosynthesis; L-lysine biosynthesis via DAP pathway; (S)-tetrahydrodipicolinate from L-aspartate: step 2/4. It participates in amino-acid biosynthesis; L-methionine biosynthesis via de novo pathway; L-homoserine from L-aspartate: step 2/3. The protein operates within amino-acid biosynthesis; L-threonine biosynthesis; L-threonine from L-aspartate: step 2/5. Catalyzes the NADPH-dependent formation of L-aspartate-semialdehyde (L-ASA) by the reductive dephosphorylation of L-aspartyl-4-phosphate. The protein is Aspartate-semialdehyde dehydrogenase of Escherichia coli O6:H1 (strain CFT073 / ATCC 700928 / UPEC).